A 305-amino-acid chain; its full sequence is tRNA-cytidine(32) 2-sulfurtransferase (305 aa).

The segment at 1–20 is disordered; sequence MTAVLPLPQPLADPAPRDPR. Residues 59-64 carry the PP-loop motif motif; sequence SGGKDS. C134, C137, and C225 together coordinate [4Fe-4S] cluster. Low complexity predominate over residues 282 to 293; sequence DAPSDVDPDPSA. The interval 282 to 305 is disordered; the sequence is DAPSDVDPDPSAWLSASHAPHDSD.

This sequence belongs to the TtcA family. In terms of assembly, homodimer. Mg(2+) serves as cofactor. Requires [4Fe-4S] cluster as cofactor.

The protein resides in the cytoplasm. The enzyme catalyses cytidine(32) in tRNA + S-sulfanyl-L-cysteinyl-[cysteine desulfurase] + AH2 + ATP = 2-thiocytidine(32) in tRNA + L-cysteinyl-[cysteine desulfurase] + A + AMP + diphosphate + H(+). It participates in tRNA modification. Functionally, catalyzes the ATP-dependent 2-thiolation of cytidine in position 32 of tRNA, to form 2-thiocytidine (s(2)C32). The sulfur atoms are provided by the cysteine/cysteine desulfurase (IscS) system. The polypeptide is tRNA-cytidine(32) 2-sulfurtransferase (Xanthomonas euvesicatoria pv. vesicatoria (strain 85-10) (Xanthomonas campestris pv. vesicatoria)).